Consider the following 276-residue polypeptide: uncharacterized protein (276 aa).

A run of 7 helical transmembrane segments spans residues 5 to 25, 32 to 52, 64 to 84, 104 to 124, 149 to 169, 193 to 213, and 244 to 264; these read TDLISIIALGLVCAFIGGMLA, PLVGYLVAGIAIGPFTPGFVG, GVILLMFGVGLHFSIGDLLAV, AGLAWGFGWGAGAGLVFGLAL, IAVGWLIVEDLAMVVALVLLP, LWVTLGLTLAKVGVFVAVMLV, and VGIAFASSELFGVSFALGAFF.

The protein belongs to the monovalent cation:proton antiporter 2 (CPA2) transporter (TC 2.A.37) family.

It localises to the cell membrane. This is an uncharacterized protein from Methylorubrum extorquens (Methylobacterium dichloromethanicum).